Here is a 366-residue protein sequence, read N- to C-terminus: Ubiquitin carboxyl-terminal hydrolase 46 (366 aa).

The 331-residue stretch at phenylalanine 35 to arginine 365 folds into the USP domain. Catalysis depends on cysteine 44, which acts as the Nucleophile. Cysteine 182, cysteine 185, cysteine 229, and cysteine 232 together coordinate Zn(2+). Histidine 313 acts as the Proton acceptor in catalysis.

This sequence belongs to the peptidase C19 family. USP12/USP46 subfamily. As to quaternary structure, interacts with WDR48. Interacts with WDR20. Interacts with DMWD. Component of the USP46/WDR20/WDR48 deubiquitinating complex. As to expression, detected in lung and spleen, and at lower levels in brain, kidney, testis and liver.

The protein resides in the cytoplasm. The enzyme catalyses Thiol-dependent hydrolysis of ester, thioester, amide, peptide and isopeptide bonds formed by the C-terminal Gly of ubiquitin (a 76-residue protein attached to proteins as an intracellular targeting signal).. In terms of biological role, deubiquitinating enzyme that plays a role in behavior, possibly by regulating GABA action. May act by mediating the deubiquitination of GAD1/GAD67. Has almost no deubiquitinating activity by itself and requires the interaction with WDR48 to have a high activity. Not involved in deubiquitination of monoubiquitinated FANCD2. This Rattus norvegicus (Rat) protein is Ubiquitin carboxyl-terminal hydrolase 46.